Here is a 375-residue protein sequence, read N- to C-terminus: Trichodiene synthase (375 aa).

The protein belongs to the trichodiene synthase family.

It catalyses the reaction (2E,6E)-farnesyl diphosphate = trichodiene + diphosphate. It participates in sesquiterpene biosynthesis; trichothecene biosynthesis. Its function is as follows. TS is a member of the terpene cyclase group of enzymes. It catalyzes the isomerization and cyclization of farnesyl pyro-phosphate to form trichodiene, the first cyclic intermediate in the biosynthetic pathway for trichothecenes. It serves to branch trichothecene biosynthesis from the isoprenoid pathway. The protein is Trichodiene synthase (TRI5) of Fusarium mesoamericanum.